A 353-amino-acid chain; its full sequence is Protein RecA (353 aa).

75 to 82 (GPESSGKT) provides a ligand contact to ATP.

It belongs to the RecA family.

It is found in the cytoplasm. Functionally, can catalyze the hydrolysis of ATP in the presence of single-stranded DNA, the ATP-dependent uptake of single-stranded DNA by duplex DNA, and the ATP-dependent hybridization of homologous single-stranded DNAs. It interacts with LexA causing its activation and leading to its autocatalytic cleavage. This is Protein RecA from Cupriavidus pinatubonensis (strain JMP 134 / LMG 1197) (Cupriavidus necator (strain JMP 134)).